The primary structure comprises 350 residues: Bifunctional nitrilase/nitrile hydratase NIT4B (350 aa).

In terms of domain architecture, CN hydrolase spans 30–302 (VRATVVQAST…EALISADLDL (273 aa)). The active-site Proton acceptor is the E70. The active site involves K157. The active-site Nucleophile is the C191.

Belongs to the carbon-nitrogen hydrolase superfamily. Nitrilase family. In terms of tissue distribution, highly expressed in leaves and cotyledons, lower expression in stems and roots.

It carries out the reaction L-asparagine = 3-cyano-L-alanine + H2O. It catalyses the reaction 3-cyano-L-alanine + 2 H2O = L-aspartate + NH4(+). Functionally, involved in the cyanide detoxification pathway. Has nitrilase and nitrile-hydratase activity in the ratio 3.3:1, producing both asparagine and aspartic acid from beta-cyano-L-alanine (Ala(CN)). Can also use 3-phenylpropionitrile as substrate, but not indole-3-acetonitrile. The protein is Bifunctional nitrilase/nitrile hydratase NIT4B (NIT4B) of Lupinus angustifolius (Narrow-leaved blue lupine).